Reading from the N-terminus, the 722-residue chain is Polyribonucleotide nucleotidyltransferase (722 aa).

Residues Asp487 and Asp493 each contribute to the Mg(2+) site. Positions 554-613 (PRIETFKIPTDKIREVIGTGGKVIREIVEKTGAKVNIEDDGTVKVASSDGESIKAAIKWI) constitute a KH domain. One can recognise an S1 motif domain in the interval 623–691 (GEIYEGTVVK…DRGKTRLSMK (69 aa)). The interval 697 to 722 (TGEDLEAKQKAEAKAEGEAPAQAAGE) is disordered. Over residues 701–713 (LEAKQKAEAKAEG) the composition is skewed to basic and acidic residues.

It belongs to the polyribonucleotide nucleotidyltransferase family. Requires Mg(2+) as cofactor.

The protein localises to the cytoplasm. The enzyme catalyses RNA(n+1) + phosphate = RNA(n) + a ribonucleoside 5'-diphosphate. Involved in mRNA degradation. Catalyzes the phosphorolysis of single-stranded polyribonucleotides processively in the 3'- to 5'-direction. This chain is Polyribonucleotide nucleotidyltransferase, found in Rhodopseudomonas palustris (strain ATCC BAA-98 / CGA009).